Consider the following 260-residue polypeptide: G patch domain-containing protein 11 (260 aa).

A coiled-coil region spans residues 25–61 (MLRQIREARRKEEKRQEANLKNRQKSIKEEEQERRDM). Positions 33–60 (RRKEEKRQEANLKNRQKSIKEEEQERRD) are disordered. The 47-residue stretch at 69-115 (CENKGFALLQKMGYKSGQALGKSGDGIVEPIPLNVKTGKSGIGHETL) folds into the G-patch domain. Position 123 is an N6-acetyllysine (Lys123). Positions 187–212 (WLRPEEETEEETEEEKEQDEDEYKSE) are disordered. Over residues 192 to 210 (EETEEETEEEKEQDEDEYK) the composition is skewed to acidic residues.

This sequence belongs to the GPATCH11 family.

Its subcellular location is the chromosome. It localises to the centromere. The protein localises to the kinetochore. In Bos taurus (Bovine), this protein is G patch domain-containing protein 11 (GPATCH11).